Consider the following 313-residue polypeptide: Interferon-inducible double-stranded RNA-dependent protein kinase activator A (313 aa).

Residues 1 to 20 (MSHSRHRAEAPPLQREDSGT) form a disordered region. Sufficient for self-association and interaction with TARBP2 stretches follow at residues 1–103 (MSHS…KANA), 102–195 (NASI…FSNI), and 195–313 (ISPE…AERK). A Phosphoserine modification is found at Ser18. DRBM domains follow at residues 34 to 101 (TPIQ…ILKA), 126 to 194 (NPIG…KFSN), and 240 to 308 (DYIQ…YLKI). A phosphoserine mark is found at Ser167, Ser246, and Ser287.

It belongs to the PRKRA family. In terms of assembly, homodimer. Interacts with EIF2AK2/PKR through its DRBM domains. Interacts with DICER1, AGO2 and TARBP2. Also able to interact with dsRNA. Interacts with UBC9. Forms a complex with UBC9 and p53/TP53. Interacts with DUS2L (via DRBM domain). In terms of processing, phosphorylated at Ser-246 in unstressed cells and at Ser-287 in stressed cells. Phosphorylation at Ser-246 appears to be a prerequisite for subsequent phosphorylation at Ser-287. Phosphorylation at Ser-246 and Ser-287 are necessary for activation of EIF2AK2/PKR under conditions of stress.

It localises to the cytoplasm. Its subcellular location is the perinuclear region. Functionally, activates EIF2AK2/PKR in the absence of double-stranded RNA (dsRNA), leading to phosphorylation of EIF2S1/EFI2-alpha and inhibition of translation and induction of apoptosis. Required for siRNA production by DICER1 and for subsequent siRNA-mediated post-transcriptional gene silencing. Does not seem to be required for processing of pre-miRNA to miRNA by DICER1. Promotes UBC9-p53/TP53 association, sumoylation and phosphorylation of p53/TP53 at 'Lys-386' at 'Ser-392' respectively and enhances its activity in a EIF2AK2/PKR-dependent manner. The sequence is that of Interferon-inducible double-stranded RNA-dependent protein kinase activator A (Prkra) from Rattus norvegicus (Rat).